The primary structure comprises 432 residues: Enolase (432 aa).

Residue Gln-167 coordinates (2R)-2-phosphoglycerate. The active-site Proton donor is the Glu-209. Mg(2+)-binding residues include Asp-246, Glu-290, and Asp-317. The (2R)-2-phosphoglycerate site is built by Lys-342, Arg-371, Ser-372, and Lys-393. Catalysis depends on Lys-342, which acts as the Proton acceptor.

Belongs to the enolase family. As to quaternary structure, component of the RNA degradosome, a multiprotein complex involved in RNA processing and mRNA degradation. The cofactor is Mg(2+).

It localises to the cytoplasm. The protein localises to the secreted. It is found in the cell surface. It catalyses the reaction (2R)-2-phosphoglycerate = phosphoenolpyruvate + H2O. The protein operates within carbohydrate degradation; glycolysis; pyruvate from D-glyceraldehyde 3-phosphate: step 4/5. In terms of biological role, catalyzes the reversible conversion of 2-phosphoglycerate (2-PG) into phosphoenolpyruvate (PEP). It is essential for the degradation of carbohydrates via glycolysis. This chain is Enolase, found in Cronobacter sakazakii (strain ATCC BAA-894) (Enterobacter sakazakii).